Here is a 240-residue protein sequence, read N- to C-terminus: Ubiquinone biosynthesis O-methyltransferase (240 aa).

Positions 44, 64, 85, and 129 each coordinate S-adenosyl-L-methionine.

Belongs to the methyltransferase superfamily. UbiG/COQ3 family.

It catalyses the reaction a 3-demethylubiquinol + S-adenosyl-L-methionine = a ubiquinol + S-adenosyl-L-homocysteine + H(+). It carries out the reaction a 3-(all-trans-polyprenyl)benzene-1,2-diol + S-adenosyl-L-methionine = a 2-methoxy-6-(all-trans-polyprenyl)phenol + S-adenosyl-L-homocysteine + H(+). It participates in cofactor biosynthesis; ubiquinone biosynthesis. Its function is as follows. O-methyltransferase that catalyzes the 2 O-methylation steps in the ubiquinone biosynthetic pathway. This is Ubiquinone biosynthesis O-methyltransferase from Escherichia coli O7:K1 (strain IAI39 / ExPEC).